Consider the following 631-residue polypeptide: Bromodomain-containing protein 9 (631 aa).

Disordered regions lie at residues 1–26 and 39–116; these read MGKKHKKYRPEWRAVEGDYEDKPLEK and VTEL…TLPK. Composition is skewed to basic and acidic residues over residues 9–26 and 50–63; these read RPEWRAVEGDYEDKPLEK and SYYDDRSDHEWERH. A compositionally biased stretch (basic residues) spans 64–73; that stretch reads KEKKKKKKKK. Residues 74 to 85 show a composition bias toward basic and acidic residues; that stretch reads SEKEKYADDDER. Positions 86 to 96 are enriched in basic residues; it reads RRRKEEKKKKR. Residues 166–270 enclose the Bromo domain; sequence NEATPHQQLL…HTGFKMMSKQ (105 aa). The histone H4K5ac H4K8ac and histone H4K5bu H4K8bu binding stretch occupies residues 244 to 246; the sequence is VYN. Residues 571–631 form a disordered region; sequence ASVDRVGSRP…SPEPGSTANS (61 aa). The span at 581 to 590 shows a compositional bias: low complexity; that stretch reads SSNLSSLSNA.

As to quaternary structure, binds acetylated histones H3 and H4. Binds butyrylated histone H4.

Its subcellular location is the nucleus. Its function is as follows. Plays a role in chromatin remodeling and regulation of transcription. Acts as a chromatin reader that recognizes and binds acylated histones: binds histones that are acetylated and/or butyrylated. This Danio rerio (Zebrafish) protein is Bromodomain-containing protein 9 (brd9).